We begin with the raw amino-acid sequence, 377 residues long: Succinyl-diaminopimelate desuccinylase (377 aa).

Position 68 (H68) interacts with Zn(2+). The active site involves D70. A Zn(2+)-binding site is contributed by D101. The active-site Proton acceptor is the E135. Residues E136, E164, and H350 each coordinate Zn(2+).

It belongs to the peptidase M20A family. DapE subfamily. As to quaternary structure, homodimer. Zn(2+) serves as cofactor. Requires Co(2+) as cofactor.

The enzyme catalyses N-succinyl-(2S,6S)-2,6-diaminopimelate + H2O = (2S,6S)-2,6-diaminopimelate + succinate. It participates in amino-acid biosynthesis; L-lysine biosynthesis via DAP pathway; LL-2,6-diaminopimelate from (S)-tetrahydrodipicolinate (succinylase route): step 3/3. Functionally, catalyzes the hydrolysis of N-succinyl-L,L-diaminopimelic acid (SDAP), forming succinate and LL-2,6-diaminopimelate (DAP), an intermediate involved in the bacterial biosynthesis of lysine and meso-diaminopimelic acid, an essential component of bacterial cell walls. The chain is Succinyl-diaminopimelate desuccinylase from Aliivibrio fischeri (strain ATCC 700601 / ES114) (Vibrio fischeri).